Reading from the N-terminus, the 369-residue chain is Flagellar P-ring protein (369 aa).

The N-terminal stretch at 1 to 22 (MIKLKQLIAATLLLSAAFGAHA) is a signal peptide.

The protein belongs to the FlgI family. As to quaternary structure, the basal body constitutes a major portion of the flagellar organelle and consists of four rings (L,P,S, and M) mounted on a central rod.

It is found in the periplasm. The protein resides in the bacterial flagellum basal body. Assembles around the rod to form the L-ring and probably protects the motor/basal body from shearing forces during rotation. This is Flagellar P-ring protein from Pseudomonas syringae pv. tomato (strain ATCC BAA-871 / DC3000).